The primary structure comprises 697 residues: Phosphate acetyltransferase (697 aa).

Residues Leu-374–Lys-697 are phosphate acetyltransferase.

This sequence in the N-terminal section; belongs to the CobB/CobQ family. It in the C-terminal section; belongs to the phosphate acetyltransferase and butyryltransferase family.

The protein localises to the cytoplasm. It carries out the reaction acetyl-CoA + phosphate = acetyl phosphate + CoA. The protein operates within metabolic intermediate biosynthesis; acetyl-CoA biosynthesis; acetyl-CoA from acetate: step 2/2. In terms of biological role, involved in acetate metabolism. The chain is Phosphate acetyltransferase (pta) from Synechocystis sp. (strain ATCC 27184 / PCC 6803 / Kazusa).